A 180-amino-acid polypeptide reads, in one-letter code: Isopentenyl-diphosphate Delta-isomerase (180 aa).

His26 and His32 together coordinate Mn(2+). A Nudix hydrolase domain is found at 30–168 (ALHLAFSVLL…PELFTAWFPQ (139 aa)). Cys70 is a catalytic residue. A Mg(2+)-binding site is contributed by Cys70. A Mn(2+)-binding site is contributed by His72. Glu90 lines the Mg(2+) pocket. Mn(2+) contacts are provided by Glu117 and Glu119. Residue Glu119 is part of the active site.

It belongs to the IPP isomerase type 1 family. Mg(2+) is required as a cofactor. It depends on Mn(2+) as a cofactor.

It is found in the cytoplasm. The enzyme catalyses isopentenyl diphosphate = dimethylallyl diphosphate. The protein operates within isoprenoid biosynthesis; dimethylallyl diphosphate biosynthesis; dimethylallyl diphosphate from isopentenyl diphosphate: step 1/1. Catalyzes the 1,3-allylic rearrangement of the homoallylic substrate isopentenyl (IPP) to its highly electrophilic allylic isomer, dimethylallyl diphosphate (DMAPP). The chain is Isopentenyl-diphosphate Delta-isomerase from Photobacterium profundum (strain SS9).